A 245-amino-acid polypeptide reads, in one-letter code: 1-(5-phosphoribosyl)-5-[(5-phosphoribosylamino)methylideneamino] imidazole-4-carboxamide isomerase (245 aa).

Residue aspartate 7 is the Proton acceptor of the active site. Catalysis depends on aspartate 129, which acts as the Proton donor.

It belongs to the HisA/HisF family.

The protein localises to the cytoplasm. It carries out the reaction 1-(5-phospho-beta-D-ribosyl)-5-[(5-phospho-beta-D-ribosylamino)methylideneamino]imidazole-4-carboxamide = 5-[(5-phospho-1-deoxy-D-ribulos-1-ylimino)methylamino]-1-(5-phospho-beta-D-ribosyl)imidazole-4-carboxamide. The protein operates within amino-acid biosynthesis; L-histidine biosynthesis; L-histidine from 5-phospho-alpha-D-ribose 1-diphosphate: step 4/9. This Salmonella heidelberg (strain SL476) protein is 1-(5-phosphoribosyl)-5-[(5-phosphoribosylamino)methylideneamino] imidazole-4-carboxamide isomerase.